We begin with the raw amino-acid sequence, 914 residues long: Effector protein hopAE1 (914 aa).

Over residues 1 to 13 (MMPSQITRSSHSS) the composition is skewed to polar residues. The interval 1-31 (MMPSQITRSSHSSLPEVAPASGDAAGVSEQT) is disordered.

The protein belongs to the HopW family.

The protein resides in the secreted. This is Effector protein hopAE1 (hopAE1) from Pseudomonas syringae pv. syringae (strain B728a).